The chain runs to 772 residues: U3 small nucleolar RNA-associated protein 25 homolog (772 aa).

Residues 1-179 (MGKRRNRGRS…SEEFTDVKHE (179 aa)) form a disordered region. Promotes p53/TP53 degradation stretches follow at residues 1 to 201 (MGKR…SQRP) and 589 to 651 (VQLP…KKEE). Residue Ser10 is modified to Phosphoserine. Basic and acidic residues predominate over residues 25 to 43 (RDFGEEHPFYDRVSKKEAK). A phosphoserine mark is found at Ser52, Ser60, and Ser64. Over residues 54-70 (DSSHSESESESEQEHVS) the composition is skewed to basic and acidic residues. Residues 84–124 (EEEEEEEEEEEEEEEEEEEEEEEEEDDSAVGDAEMNEEAGS) show a composition bias toward acidic residues. Residues 127 to 136 (GSVGEAAVSE) are compositionally biased toward low complexity. Positions 169-179 (SSEEFTDVKHE) are enriched in basic and acidic residues. Positions 652 to 713 (LNFTHICEYT…YELPTYPHFY (62 aa)) are represses p53/TP53 degradation.

It belongs to the UTP25 family. Interacts with CAPN3; the interaction is required for CAPN3 translocation to the nucleolus. Phosphorylated. Phosphorylation is required to promote p53/TP53 degradation in the nucleolus which promotes cell cycle progression and liver development. In terms of tissue distribution, expressed in all tissues tested: brain, small intestine, large intestine, stomach, liver, spleen, thymus, lung, kidney and testes (at protein level).

It is found in the nucleus. It localises to the nucleolus. Functionally, component of the ribosomal small subunit processome for the biogenesis of ribosomes, functions in pre-ribosomal RNA (pre-rRNA) processing. Essential for embryonic development in part through the regulation of p53 pathway. Controls the expansion growth of digestive organs and liver. Also involved in the sympathetic neuronal development. Mediates, with CAPN3, the proteasome-independent degradation of p53/TP53. The protein is U3 small nucleolar RNA-associated protein 25 homolog of Mus musculus (Mouse).